A 346-amino-acid polypeptide reads, in one-letter code: Quinolinate synthase (346 aa).

The iminosuccinate site is built by His-47 and Ser-68. A [4Fe-4S] cluster-binding site is contributed by Cys-113. Residues 139–141 (YAN) and Ser-156 contribute to the iminosuccinate site. Cys-200 contributes to the [4Fe-4S] cluster binding site. Residues 226–228 (HPE) and Thr-243 contribute to the iminosuccinate site. Residue Cys-297 coordinates [4Fe-4S] cluster.

It belongs to the quinolinate synthase family. Type 1 subfamily. The cofactor is [4Fe-4S] cluster.

Its subcellular location is the cytoplasm. It carries out the reaction iminosuccinate + dihydroxyacetone phosphate = quinolinate + phosphate + 2 H2O + H(+). It participates in cofactor biosynthesis; NAD(+) biosynthesis; quinolinate from iminoaspartate: step 1/1. In terms of biological role, catalyzes the condensation of iminoaspartate with dihydroxyacetone phosphate to form quinolinate. The sequence is that of Quinolinate synthase from Photorhabdus laumondii subsp. laumondii (strain DSM 15139 / CIP 105565 / TT01) (Photorhabdus luminescens subsp. laumondii).